Reading from the N-terminus, the 192-residue chain is Large ribosomal subunit protein uL5 (192 aa).

It belongs to the universal ribosomal protein uL5 family. Part of the 50S ribosomal subunit; contacts the 5S rRNA and probably tRNA. Forms a bridge to the 30S subunit in the 70S ribosome.

In terms of biological role, this is one of the proteins that bind and probably mediate the attachment of the 5S RNA into the large ribosomal subunit, where it forms part of the central protuberance. In the 70S ribosome it contacts protein S13 of the 30S subunit (bridge B1b), connecting the 2 subunits; this bridge is implicated in subunit movement. May contact the P site tRNA; the 5S rRNA and some of its associated proteins might help stabilize positioning of ribosome-bound tRNAs. The protein is Large ribosomal subunit protein uL5 of Aeropyrum pernix (strain ATCC 700893 / DSM 11879 / JCM 9820 / NBRC 100138 / K1).